A 138-amino-acid polypeptide reads, in one-letter code: Actophorin (138 aa).

Residues 3–134 form the ADF-H domain; it reads GIQLADEVTS…NLDEVIAKVK (132 aa).

The protein belongs to the actin-binding proteins ADF family. As to quaternary structure, interacts with F-actin. Does not interact with G-actin. Interacts with 14-3-3 protein 3.

The protein resides in the cytoplasm. It localises to the cytoskeleton. The protein localises to the cell membrane. Its subcellular location is the cell projection. It is found in the phagocytic cup. The protein resides in the pseudopodium. Actin-binding protein that severs actin filaments. In Entamoeba histolytica (strain ATCC 30459 / HM-1:IMSS / ABRM), this protein is Actophorin.